A 414-amino-acid polypeptide reads, in one-letter code: CinA-like protein (414 aa).

It belongs to the CinA family.

The chain is CinA-like protein from Akkermansia muciniphila (strain ATCC BAA-835 / DSM 22959 / JCM 33894 / BCRC 81048 / CCUG 64013 / CIP 107961 / Muc).